The sequence spans 666 residues: Calmodulin-binding receptor kinase CaMRLK (666 aa).

The N-terminal stretch at 1-17 (MFLKLFLLLSLVSFSHS) is a signal peptide. Topologically, residues 18–297 (DSSSTVSCPN…KTHRTNHTPL (280 aa)) are extracellular. Asparagine 27, asparagine 45, asparagine 52, asparagine 68, asparagine 78, asparagine 89, asparagine 110, asparagine 126, asparagine 137, asparagine 148, asparagine 154, asparagine 189, asparagine 212, asparagine 229, and asparagine 261 each carry an N-linked (GlcNAc...) asparagine glycan. LRR repeat units lie at residues 79–103 (LTRL…LWSM), 105–127 (GLVS…PVNG), 130–152 (LSAV…FTGF), 153–177 (TNLT…SLSG), 178–197 (LRHL…PISG), 198–224 (LKSL…NLNH), and 226–246 (QFLN…KYRK). Residues 298–318 (VIGLSSSLGALIIVIFAAAII) form a helical membrane-spanning segment. The segment at 319–337 (LIRRRMKSARTKSRWAISN) is calmodulin binding. Residues 319-666 (LIRRRMKSAR…LLKDIRTVSR (348 aa)) lie on the Cytoplasmic side of the membrane. Positions 395–661 (FGTESVISDG…QQVLGLLKDI (267 aa)) constitute a Protein kinase domain. ATP contacts are provided by residues 401–409 (ISDGTCGPL) and lysine 423.

Belongs to the protein kinase superfamily. Ser/Thr protein kinase family. In terms of assembly, binds calmodulin (CaM) in a calcium-dependent manner. Interacts with CAM1, but not with CAM8. Mn(2+) is required as a cofactor. It depends on Mg(2+) as a cofactor. Post-translationally, calmodulin (CaM)-independent autophosphorylation. As to expression, expressed in reproductive and vegetative tissues, with higher levels in seedlings and flowers, but not in leaves.

Its subcellular location is the cell membrane. The catalysed reaction is L-seryl-[protein] + ATP = O-phospho-L-seryl-[protein] + ADP + H(+). The enzyme catalyses L-threonyl-[protein] + ATP = O-phospho-L-threonyl-[protein] + ADP + H(+). With respect to regulation, not stimulated by calmodulin (CaM). In terms of biological role, can phosphorylate the myelin basic protein in vitro. Required for endosperm development in embryos. Maybe involved in auxin and osmotic stress responses. This is Calmodulin-binding receptor kinase CaMRLK from Arabidopsis thaliana (Mouse-ear cress).